Here is a 372-residue protein sequence, read N- to C-terminus: tRNA-specific 2-thiouridylase MnmA (372 aa).

Residues 16–23 and methionine 42 contribute to the ATP site; that span reads GMSGGVDS. Positions 102–104 are interaction with target base in tRNA; the sequence is NPD. The active-site Nucleophile is cysteine 107. Cysteine 107 and cysteine 205 are disulfide-bonded. Residue glycine 132 coordinates ATP. Positions 155 to 157 are interaction with tRNA; that stretch reads KDQ. Cysteine 205 functions as the Cysteine persulfide intermediate in the catalytic mechanism. An interaction with tRNA region spans residues 317-318; that stretch reads RY.

This sequence belongs to the MnmA/TRMU family.

The protein resides in the cytoplasm. It catalyses the reaction S-sulfanyl-L-cysteinyl-[protein] + uridine(34) in tRNA + AH2 + ATP = 2-thiouridine(34) in tRNA + L-cysteinyl-[protein] + A + AMP + diphosphate + H(+). Functionally, catalyzes the 2-thiolation of uridine at the wobble position (U34) of tRNA, leading to the formation of s(2)U34. The protein is tRNA-specific 2-thiouridylase MnmA of Shewanella baltica (strain OS223).